A 278-amino-acid polypeptide reads, in one-letter code: 4-hydroxy-tetrahydrodipicolinate reductase (278 aa).

NAD(+)-binding positions include 13–18 (GAAGKM) and 111–113 (GTT). The Proton donor/acceptor role is filled by His-167. His-168 is a (S)-2,3,4,5-tetrahydrodipicolinate binding site. The active-site Proton donor is the Lys-171. Residue 177–178 (GT) participates in (S)-2,3,4,5-tetrahydrodipicolinate binding.

This sequence belongs to the DapB family.

The protein localises to the cytoplasm. The enzyme catalyses (S)-2,3,4,5-tetrahydrodipicolinate + NAD(+) + H2O = (2S,4S)-4-hydroxy-2,3,4,5-tetrahydrodipicolinate + NADH + H(+). The catalysed reaction is (S)-2,3,4,5-tetrahydrodipicolinate + NADP(+) + H2O = (2S,4S)-4-hydroxy-2,3,4,5-tetrahydrodipicolinate + NADPH + H(+). It participates in amino-acid biosynthesis; L-lysine biosynthesis via DAP pathway; (S)-tetrahydrodipicolinate from L-aspartate: step 4/4. Catalyzes the conversion of 4-hydroxy-tetrahydrodipicolinate (HTPA) to tetrahydrodipicolinate. The protein is 4-hydroxy-tetrahydrodipicolinate reductase of Nostoc punctiforme (strain ATCC 29133 / PCC 73102).